We begin with the raw amino-acid sequence, 674 residues long: UvrABC system protein B (674 aa).

The Helicase ATP-binding domain occupies 26–414 (EGLDSGLAHQ…SGNDIAEQVV (389 aa)). Position 39–46 (39–46 (GVTGSGKT)) interacts with ATP. The Beta-hairpin signature appears at 92 to 115 (YYDYYQPEAYVPTTDTFIEKDASV). Residues 432–586 (QVDDLLSEIR…ALHNKKNGIT (155 aa)) enclose the Helicase C-terminal domain. Positions 634–669 (ELEIQRLETEMYDLAQNLEFEKAAEARDKIHTLRQQ) constitute a UVR domain.

This sequence belongs to the UvrB family. As to quaternary structure, forms a heterotetramer with UvrA during the search for lesions. Interacts with UvrC in an incision complex.

The protein localises to the cytoplasm. Functionally, the UvrABC repair system catalyzes the recognition and processing of DNA lesions. A damage recognition complex composed of 2 UvrA and 2 UvrB subunits scans DNA for abnormalities. Upon binding of the UvrA(2)B(2) complex to a putative damaged site, the DNA wraps around one UvrB monomer. DNA wrap is dependent on ATP binding by UvrB and probably causes local melting of the DNA helix, facilitating insertion of UvrB beta-hairpin between the DNA strands. Then UvrB probes one DNA strand for the presence of a lesion. If a lesion is found the UvrA subunits dissociate and the UvrB-DNA preincision complex is formed. This complex is subsequently bound by UvrC and the second UvrB is released. If no lesion is found, the DNA wraps around the other UvrB subunit that will check the other stand for damage. The protein is UvrABC system protein B of Photobacterium profundum (strain SS9).